The sequence spans 305 residues: Protoheme IX farnesyltransferase (305 aa).

The next 9 membrane-spanning stretches (helical) occupy residues 31 to 51, 52 to 72, 102 to 119, 123 to 145, 151 to 171, 179 to 199, 218 to 238, 240 to 260, and 281 to 301; these read VMSL…YSVH, PFIA…AGAI, ALSF…FMAL, LLAS…IWLK, NIVI…AAVS, IILF…LALF, ILYT…VSLM, FFIG…GLVF, and FAYS…TSTI.

It belongs to the UbiA prenyltransferase family. Protoheme IX farnesyltransferase subfamily.

The protein resides in the cell inner membrane. The enzyme catalyses heme b + (2E,6E)-farnesyl diphosphate + H2O = Fe(II)-heme o + diphosphate. It functions in the pathway porphyrin-containing compound metabolism; heme O biosynthesis; heme O from protoheme: step 1/1. Converts heme B (protoheme IX) to heme O by substitution of the vinyl group on carbon 2 of heme B porphyrin ring with a hydroxyethyl farnesyl side group. This is Protoheme IX farnesyltransferase from Rickettsia akari (strain Hartford).